The chain runs to 298 residues: Leucine-rich repeat-containing protein 55 (298 aa).

Residues 1–34 (MGDTWAQLPWPGPPHSALLLVFFLLAAGVMHSDA) form the signal peptide. In terms of domain architecture, LRRNT spans 35–65 (GASCPVLCTCRNQVVDCSNQRLFSVPPDLPM). Intrachain disulfides connect Cys-38–Cys-44 and Cys-42–Cys-51. 5 LRR repeats span residues 66 to 87 (DTRNLSLAHNRIAAVPPGYLTC), 90 to 111 (ELRVLDLRNNSLMELPPGLFLH), 114 to 135 (RLAHLDLSYNNLSHVPADMFRE), 138 to 160 (GLVHIDLSHNPWLRRVHPQAFQG), and 163 to 186 (HLRDLDLSYGGLAFLSLEALEGLP). The LRRCT domain maps to 196 to 251 (NPWVCGCTMEPLLKWLRNRIQRCTADSQLAECRGPPEVEGAPLFSLTEESFKACHL). Intrachain disulfides connect Cys-200–Cys-227 and Cys-202–Cys-249. Residues 259–279 (LFIAFVGFVVSIASVATNFLL) traverse the membrane as a helical segment.

As to quaternary structure, interacts with KCNMA1.

The protein resides in the cell membrane. In terms of biological role, auxiliary protein of the large-conductance, voltage and calcium-activated potassium channel (BK alpha). Modulates gating properties by producing a marked shift in the BK channel's voltage dependence of activation in the hyperpolarizing direction, and in the absence of calcium. The sequence is that of Leucine-rich repeat-containing protein 55 (Lrrc55) from Rattus norvegicus (Rat).